The primary structure comprises 336 residues: Ribosomal RNA large subunit methyltransferase F (336 aa).

It belongs to the methyltransferase superfamily. METTL16/RlmF family.

The protein resides in the cytoplasm. It catalyses the reaction adenosine(1618) in 23S rRNA + S-adenosyl-L-methionine = N(6)-methyladenosine(1618) in 23S rRNA + S-adenosyl-L-homocysteine + H(+). In terms of biological role, specifically methylates the adenine in position 1618 of 23S rRNA. The sequence is that of Ribosomal RNA large subunit methyltransferase F from Serratia proteamaculans (strain 568).